The chain runs to 473 residues: Serine palmitoyltransferase 1 (473 aa).

The interaction with SPTLC2 stretch occupies residues 1-66; it reads MATATEQWVL…KEELIEEWQP (66 aa). A helical transmembrane segment spans residues 16–36; sequence ALYEAPAYHLILEGILILWII. Residue Tyr164 is modified to Phosphotyrosine; by ABL.

It belongs to the class-II pyridoxal-phosphate-dependent aminotransferase family. As to quaternary structure, component of the serine palmitoyltransferase (SPT) complex, which is also composed of SPTLC2 or SPTLC3 and SPTSSA or SPTSSB. The heterodimer with SPTLC2 or SPTLC3 forms the catalytic core of the enzyme, while SPTSSA or SPTSSB subunits determine substrate specificity. SPT also interacts with ORMDL proteins, especially ORMDL3, which negatively regulate SPT activity in the presence of ceramides. Forms dimers of heterodimers with SPTLC2. Interacts with RTN4. Requires pyridoxal 5'-phosphate as cofactor. Phosphorylation at Tyr-164 inhibits activity and promotes cell survival.

The protein resides in the endoplasmic reticulum membrane. The enzyme catalyses L-serine + hexadecanoyl-CoA + H(+) = 3-oxosphinganine + CO2 + CoA. It carries out the reaction octadecanoyl-CoA + L-serine + H(+) = 3-oxoeicosasphinganine + CO2 + CoA. It catalyses the reaction tetradecanoyl-CoA + L-serine + H(+) = 3-oxohexadecasphinganine + CO2 + CoA. The catalysed reaction is dodecanoyl-CoA + L-serine + H(+) = 3-oxotetradecasphinganine + CO2 + CoA. The protein operates within lipid metabolism; sphingolipid metabolism. SPT complex catalytic activity is negatively regulated by ORMDL proteins, including ORMDL3, in the presence of ceramides. This mechanism allows to maintain ceramide levels at sufficient concentrations for the production of complex sphingolipids, but which prevents the accumulation of ceramides to levels that trigger apoptosis. Functionally, component of the serine palmitoyltransferase multisubunit enzyme (SPT) that catalyzes the initial and rate-limiting step in sphingolipid biosynthesis by condensing L-serine and activated acyl-CoA (most commonly palmitoyl-CoA) to form long-chain bases. The SPT complex is also composed of SPTLC2 or SPTLC3 and SPTSSA or SPTSSB. Within this complex, the heterodimer with SPTLC2 or SPTLC3 forms the catalytic core. The composition of the serine palmitoyltransferase (SPT) complex determines the substrate preference. The SPTLC1-SPTLC2-SPTSSA complex shows a strong preference for C16-CoA substrate, while the SPTLC1-SPTLC3-SPTSSA isozyme uses both C14-CoA and C16-CoA as substrates, with a slight preference for C14-CoA. The SPTLC1-SPTLC2-SPTSSB complex shows a strong preference for C18-CoA substrate, while the SPTLC1-SPTLC3-SPTSSB isozyme displays an ability to use a broader range of acyl-CoAs, without apparent preference. Required for adipocyte cell viability and metabolic homeostasis. This chain is Serine palmitoyltransferase 1 (SPTLC1), found in Pongo abelii (Sumatran orangutan).